The primary structure comprises 525 residues: Ribosomal protein S6 kinase beta-1 (525 aa).

The segment at 1–54 (MRRRRRRDGFYPAPDFRDREAEDMAGVFDIDLDQPEDAGSEDELEEGGQLNESM) is disordered. Positions 28–32 (FDIDL) match the TOS motif motif. The span at 30–46 (IDLDQPEDAGSEDELEE) shows a compositional bias: acidic residues. In terms of domain architecture, Protein kinase spans 91–352 (FELLRVLGKG…AGEVQAHPFF (262 aa)). Residues 97 to 105 (LGKGGYGKV) and K123 contribute to the ATP site. D218 functions as the Proton acceptor in the catalytic mechanism. At T252 the chain carries Phosphothreonine; by PDPK1. The region spanning 353–423 (RHINWEELLA…VAPSVLESVK (71 aa)) is the AGC-kinase C-terminal domain. A disordered region spans residues 380–399 (SQFDSKFTRQTPVDSPDDST). A compositionally biased stretch (polar residues) spans 381–399 (QFDSKFTRQTPVDSPDDST). Phosphoserine is present on S394. T412 carries the phosphothreonine; by MTOR, NEK6 and NEK7 modification. The interval 424 to 525 (EKFSFEPKIR…KRPEHLRMNL (102 aa)) is autoinhibitory domain. Phosphoserine occurs at positions 434 and 441. T444 is modified (phosphothreonine). Phosphoserine occurs at positions 447 and 452. K516 is subject to N6-acetyllysine.

The protein belongs to the protein kinase superfamily. AGC Ser/Thr protein kinase family. S6 kinase subfamily. As to quaternary structure, interacts with PPP1R9A/neurabin-1. Interacts with RPTOR. Interacts with IRS1. Interacts with EIF3B and EIF3C. Interacts with TRAF4. Interacts with POLDIP3. Interacts (via N-terminus) with IER5. (Microbial infection) Interacts with Mumps virus phosphoprotein; this interaction may play a role in the viral replication and transcription. In terms of processing, phosphorylation at Thr-412 is regulated by mTORC1. The phosphorylation at this site is maintained by an agonist-dependent autophosphorylation mechanism. Activated by phosphorylation at Thr-252 by PDPK1. Dephosphorylation by PPP1CC at Thr-412 in mitochondrion. Widely expressed.

The protein resides in the synapse. The protein localises to the synaptosome. Its subcellular location is the mitochondrion outer membrane. It localises to the mitochondrion. It is found in the nucleus. The protein resides in the cytoplasm. The catalysed reaction is L-seryl-[protein] + ATP = O-phospho-L-seryl-[protein] + ADP + H(+). It catalyses the reaction L-threonyl-[protein] + ATP = O-phospho-L-threonyl-[protein] + ADP + H(+). With respect to regulation, activation requires multiple phosphorylation events on serine/threonine residues. Activation appears to be first mediated by phosphorylation of multiple sites in the autoinhibitory domain, which facilitates phosphorylation at Thr-412, disrupting the autoinhibitory mechanism and allowing phosphorylation of Thr-252 by PDPK1. The active conformation of the kinase is believed to be stabilized by a mechanism involving three conserved phosphorylation sites located in the kinase domain activation loop (Thr-252) and in the AGC-kinase C-terminal domain (Ser-394 in the middle of the tail/linker region and Thr-412 within a hydrophobic motif at its end). Activated by mTORC1; isoform Alpha I and isoform Alpha II are sensitive to rapamycin, which inhibits activating phosphorylation at Thr-412. Activated by PDPK1. Serine/threonine-protein kinase that acts downstream of mTOR signaling in response to growth factors and nutrients to promote cell proliferation, cell growth and cell cycle progression. Regulates protein synthesis through phosphorylation of EIF4B, RPS6 and EEF2K, and contributes to cell survival by repressing the pro-apoptotic function of BAD. Under conditions of nutrient depletion, the inactive form associates with the EIF3 translation initiation complex. Upon mitogenic stimulation, phosphorylation by the mechanistic target of rapamycin complex 1 (mTORC1) leads to dissociation from the EIF3 complex and activation. The active form then phosphorylates and activates several substrates in the pre-initiation complex, including the EIF2B complex and the cap-binding complex component EIF4B. Also controls translation initiation by phosphorylating a negative regulator of EIF4A, PDCD4, targeting it for ubiquitination and subsequent proteolysis. Promotes initiation of the pioneer round of protein synthesis by phosphorylating POLDIP3/SKAR. In response to IGF1, activates translation elongation by phosphorylating EEF2 kinase (EEF2K), which leads to its inhibition and thus activation of EEF2. Also plays a role in feedback regulation of mTORC2 by mTORC1 by phosphorylating MAPKAP1/SIN1, MTOR and RICTOR, resulting in the inhibition of mTORC2 and AKT1 signaling. Also involved in feedback regulation of mTORC1 and mTORC2 by phosphorylating DEPTOR. Mediates cell survival by phosphorylating the pro-apoptotic protein BAD and suppressing its pro-apoptotic function. Phosphorylates mitochondrial URI1 leading to dissociation of a URI1-PPP1CC complex. The free mitochondrial PPP1CC can then dephosphorylate RPS6KB1 at Thr-412, which is proposed to be a negative feedback mechanism for the RPS6KB1 anti-apoptotic function. Mediates TNF-alpha-induced insulin resistance by phosphorylating IRS1 at multiple serine residues, resulting in accelerated degradation of IRS1. In cells lacking functional TSC1-2 complex, constitutively phosphorylates and inhibits GSK3B. May be involved in cytoskeletal rearrangement through binding to neurabin. Phosphorylates and activates the pyrimidine biosynthesis enzyme CAD, downstream of MTOR. Following activation by mTORC1, phosphorylates EPRS and thereby plays a key role in fatty acid uptake by adipocytes and also most probably in interferon-gamma-induced translation inhibition. The protein is Ribosomal protein S6 kinase beta-1 (RPS6KB1) of Homo sapiens (Human).